An 876-amino-acid chain; its full sequence is MAP7 domain-containing protein 3 (876 aa).

3 disordered regions span residues 30 to 139 (AEER…KFKA), 162 to 200 (GGVM…VDNT), and 402 to 438 (TEAP…IDKR). Residues 39 to 54 (INSSAGANKRSSSTPD) show a composition bias toward polar residues. Residues 58 to 136 (LKNDVKQQLA…KQKQAEDTEK (79 aa)) are a coiled coil. Composition is skewed to basic and acidic residues over residues 60-139 (NDVK…KFKA) and 169-196 (KSGK…DMQH). Serine 417 and serine 483 each carry phosphoserine. 2 coiled-coil regions span residues 549–578 (IQIR…IARK) and 626–658 (SAMM…RRKA). Disordered regions lie at residues 558–683 (QSKN…EIFP) and 742–783 (IQGK…NPNH). Composition is skewed to basic and acidic residues over residues 559–590 (SKNE…DKVP) and 630–659 (KSRD…RKAS). A compositionally biased stretch (acidic residues) spans 665 to 679 (SEDEADDEGESEDSL). The span at 750–763 (SAKKPPTRPIRSRK) shows a compositional bias: basic residues. Positions 771-782 (IRPTQSASSNPN) are enriched in polar residues.

The protein belongs to the MAP7 family. High expression in lung, skeletal muscle, brain, and kidney, with much weaker expression in spleen, small intestine, liver, and heart.

The protein localises to the cytoplasm. The protein resides in the cytoskeleton. It is found in the spindle. In terms of biological role, promotes the assembly and stability of microtubules. The polypeptide is MAP7 domain-containing protein 3 (Map7d3) (Mus musculus (Mouse)).